A 73-amino-acid chain; its full sequence is uncharacterized protein (73 aa).

The protein belongs to the asfivirus DP63R family.

This is an uncharacterized protein from Ornithodoros (relapsing fever ticks).